The following is a 354-amino-acid chain: tRNA dimethylallyltransferase (354 aa).

28-35 (GPTATGKS) is a binding site for ATP. 30–35 (TATGKS) lines the substrate pocket. An interaction with substrate tRNA region spans residues 53–56 (DSRQ).

This sequence belongs to the IPP transferase family. Monomer. The cofactor is Mg(2+).

It carries out the reaction adenosine(37) in tRNA + dimethylallyl diphosphate = N(6)-dimethylallyladenosine(37) in tRNA + diphosphate. Functionally, catalyzes the transfer of a dimethylallyl group onto the adenine at position 37 in tRNAs that read codons beginning with uridine, leading to the formation of N6-(dimethylallyl)adenosine (i(6)A). The chain is tRNA dimethylallyltransferase from Synechococcus sp. (strain JA-2-3B'a(2-13)) (Cyanobacteria bacterium Yellowstone B-Prime).